The chain runs to 187 residues: MQSEKFDINEVKRRMHGASQALQHELGGLRTGRASASMLEPVQVDAYGTHMPLNQVATVSVPEPRLLSVQVWDKSMVKAVEKAIVDSNLGLSPATEGQVLRLRIPELNQDRRKELVKVAHKYAEAARVAVRHVRRDGLDIIKKLEKAHEISEDDQKRLDHEVQKATDATISEIDQLLANKEKEILTV.

It belongs to the RRF family.

It localises to the cytoplasm. In terms of biological role, responsible for the release of ribosomes from messenger RNA at the termination of protein biosynthesis. May increase the efficiency of translation by recycling ribosomes from one round of translation to another. The sequence is that of Ribosome-recycling factor from Rhodopseudomonas palustris (strain BisB5).